A 153-amino-acid chain; its full sequence is Large ribosomal subunit protein uL15 (153 aa).

Residues 15–42 (ARRIVGRGSSSGRGTTSGRGTKGQQARA) are disordered. Over residues 23-35 (SSSGRGTTSGRGT) the composition is skewed to gly residues.

Belongs to the universal ribosomal protein uL15 family. In terms of assembly, part of the 50S ribosomal subunit.

Binds to the 23S rRNA. This chain is Large ribosomal subunit protein uL15, found in Treponema pallidum (strain Nichols).